The sequence spans 416 residues: Serine hydroxymethyltransferase (416 aa).

Residues L121 and 125–127 (GHL) each bind (6S)-5,6,7,8-tetrahydrofolate. K229 bears the N6-(pyridoxal phosphate)lysine mark. 354–356 (SPF) lines the (6S)-5,6,7,8-tetrahydrofolate pocket.

The protein belongs to the SHMT family. As to quaternary structure, homodimer. The cofactor is pyridoxal 5'-phosphate.

The protein resides in the cytoplasm. It catalyses the reaction (6R)-5,10-methylene-5,6,7,8-tetrahydrofolate + glycine + H2O = (6S)-5,6,7,8-tetrahydrofolate + L-serine. The protein operates within one-carbon metabolism; tetrahydrofolate interconversion. It functions in the pathway amino-acid biosynthesis; glycine biosynthesis; glycine from L-serine: step 1/1. Catalyzes the reversible interconversion of serine and glycine with tetrahydrofolate (THF) serving as the one-carbon carrier. This reaction serves as the major source of one-carbon groups required for the biosynthesis of purines, thymidylate, methionine, and other important biomolecules. Also exhibits THF-independent aldolase activity toward beta-hydroxyamino acids, producing glycine and aldehydes, via a retro-aldol mechanism. This chain is Serine hydroxymethyltransferase, found in Halorhodospira halophila (strain DSM 244 / SL1) (Ectothiorhodospira halophila (strain DSM 244 / SL1)).